We begin with the raw amino-acid sequence, 444 residues long: MEEEGKKGKKPGIVSPFKRVFLKGEKSRDKKAHEKVTERRPLHTVVLSLPERVEPDRLLSDYIEKEVKYLGQLTSIPGYLNPSSRTEILHFIDNAKRAHQLPGHLTQEHDAVLSLSAYNVKLAWRDGEDIILRVPIHDIAAVSYVRDDAAHLVVLKTAQDPGISPSQSLCAESSRGLSAGSLSESAVGPVEACCLVILAAESKVAAEELCCLLGQVFQVVYTESTIDFLDRAIFDGASTPTHHLSLHSDDSSTKVDIKETYEVEASTFCFPESVDVGGASPHSKTISESELSASATELLQDYMLTLRTKLSSQEIQQFAALLHEYRNGASIHEFCINLRQLYGDSRKFLLLGLRPFIPEKDSQHFENFLETIGVKDGRGIITDSFGRHRRALSTTSSSTTNGNRATGSSDDRSAPSEGDEWDRMISDISSDIEALGCSMDQDSA.

Residues 1-37 (MEEEGKKGKKPGIVSPFKRVFLKGEKSRDKKAHEKVT) are disordered. Residue Ser15 is modified to Phosphoserine. Basic and acidic residues predominate over residues 22–37 (LKGEKSRDKKAHEKVT). The PID domain maps to 59–248 (LSDYIEKEVK…TPTHHLSLHS (190 aa)). Ser164 bears the Phosphoserine mark. The harmonin homology domain stretch occupies residues 283–376 (SKTISESELS…NFLETIGVKD (94 aa)). 2 positions are modified to phosphoserine: Ser384 and Ser393. Positions 391 to 423 (ALSTTSSSTTNGNRATGSSDDRSAPSEGDEWDR) are disordered. A compositionally biased stretch (low complexity) spans 392–408 (LSTTSSSTTNGNRATGS). Residue Thr394 is modified to Phosphothreonine. Ser396 bears the Phosphoserine mark. Residue Thr399 is modified to Phosphothreonine.

Belongs to the CCM2 family. In terms of assembly, part of a complex with MAP2K3, MAP3K3 and RAC1. Binds RAC1 directly and independently of its nucleotide-bound state. Interacts with HEG1 and KRIT1; KRIT1 greatly facilitates the interaction with HEG1. Interacts with PDCD10.

The protein localises to the cytoplasm. Its function is as follows. Component of the CCM signaling pathway which is a crucial regulator of heart and vessel formation and integrity. May act through the stabilization of endothelial cell junctions. May function as a scaffold protein for MAP2K3-MAP3K3 signaling. Seems to play a major role in the modulation of MAP3K3-dependent p38 activation induced by hyperosmotic shock. This is Cerebral cavernous malformations 2 protein (CCM2) from Homo sapiens (Human).